A 344-amino-acid polypeptide reads, in one-letter code: MATSFLFSLILLLITALSLPFPLHASSVDPLSAGATTVRYWNRKIPNNAPHPDFFLSLLSPLPASVSSSLSSPLSISPSICRSARLLCPNSTYFQSLSSTVFIDGCTFSYSCTFTYEHTNITIKPGIFFREQELKEGNVVRMPDIANELTTARSSFLPRSIADRIPFKAEAVKSLFGLEPNTTLAKAVDETVAQCQSSPSKGETKRCVTSAEDMIDFAVAMLGDDIVVRSTVLPNGPGESIMIGKVKGINGGKITSSVSCHEYLFPYMVYYCHSVPKIRVYEAEILSVQTKEKINSGVAICHIDTSAWNAGHPAFVALGGKPGQNKVCHWIFNGSMTWVIADKS.

Positions 1-25 are cleaved as a signal peptide; the sequence is MATSFLFSLILLLITALSLPFPLHA. Asparagine 90, asparagine 120, asparagine 181, and asparagine 333 each carry an N-linked (GlcNAc...) asparagine glycan. The region spanning 128–341 is the BURP domain; that stretch reads FFREQELKEG…FNGSMTWVIA (214 aa).

In terms of tissue distribution, expressed in roots, stems, leaves and panicles.

The sequence is that of BURP domain-containing protein 16 (BURP16) from Oryza sativa subsp. japonica (Rice).